Here is a 119-residue protein sequence, read N- to C-terminus: Ribonuclease pancreatic (119 aa).

The residue at position 1 (Gln1) is a Pyrrolidone carboxylic acid. Residue His10 is the Proton acceptor of the active site. 3 disulfide bridges follow: Cys25-Cys80, Cys39-Cys91, and Cys57-Cys106. 40–44 is a binding site for substrate; the sequence is KTRNT. Residue His113 is the Proton donor of the active site.

It belongs to the pancreatic ribonuclease family. Monomer. Interacts with and forms tight 1:1 complexes with RNH1. Dimerization of two such complexes may occur. Interaction with RNH1 inhibits this protein. In terms of tissue distribution, pancreas.

It is found in the secreted. The enzyme catalyses an [RNA] containing cytidine + H2O = an [RNA]-3'-cytidine-3'-phosphate + a 5'-hydroxy-ribonucleotide-3'-[RNA].. It catalyses the reaction an [RNA] containing uridine + H2O = an [RNA]-3'-uridine-3'-phosphate + a 5'-hydroxy-ribonucleotide-3'-[RNA].. Endonuclease that catalyzes the cleavage of RNA on the 3' side of pyrimidine nucleotides. Acts on single-stranded and double-stranded RNA. The protein is Ribonuclease pancreatic of Iguana iguana (Common iguana).